Consider the following 332-residue polypeptide: Aquaporin-7-2 (332 aa).

Residues M1–Q40 are compositionally biased toward polar residues. Residues M1–Q46 are disordered. Residues M1 to E66 are Cytoplasmic-facing. A helical transmembrane segment spans residues F67–S87. Topologically, residues T88–F100 are extracellular. The chain crosses the membrane as a helical span at residues L101 to I121. At S122–K144 the chain is on the cytoplasmic side. An NPA 1 motif is present at residues N127 to A129. The helical transmembrane segment at V145 to A165 threads the bilayer. The Extracellular segment spans residues N166–Q199. The helical transmembrane segment at A200–L220 threads the bilayer. The Cytoplasmic segment spans residues T221–N230. A helical transmembrane segment spans residues G231 to E251. The Extracellular portion of the chain corresponds to T252–Q283. An NPA 2 motif is present at residues N257–A259. A helical membrane pass occupies residues Y284–Y304. Residues D305–V332 are Cytoplasmic-facing.

Belongs to the MIP/aquaporin (TC 1.A.8) family.

It localises to the membrane. It catalyses the reaction H2O(in) = H2O(out). Water channel required to facilitate the transport of water across membranes. Does not mediate the transport carbon dioxide across the membrane. The sequence is that of Aquaporin-7-2 from Laccaria bicolor (Bicoloured deceiver).